A 174-amino-acid chain; its full sequence is Large ribosomal subunit protein uL10 (174 aa).

The protein belongs to the universal ribosomal protein uL10 family. As to quaternary structure, part of the ribosomal stalk of the 50S ribosomal subunit. The N-terminus interacts with L11 and the large rRNA to form the base of the stalk. The C-terminus forms an elongated spine to which L12 dimers bind in a sequential fashion forming a multimeric L10(L12)X complex.

Its function is as follows. Forms part of the ribosomal stalk, playing a central role in the interaction of the ribosome with GTP-bound translation factors. This chain is Large ribosomal subunit protein uL10, found in Acidiphilium cryptum (strain JF-5).